The primary structure comprises 363 residues: NAD(P)H-quinone oxidoreductase subunit 1, chloroplastic (363 aa).

A run of 8 helical transmembrane segments spans residues 26–46 (FVWI…GVLV), 96–116 (WLFA…FLVI), 127–147 (ISIG…GLLV), 175–195 (LALC…IEIV), 203–223 (ILGW…ISAL), 253–273 (FGLF…FVTI), 303–323 (GLIA…ASIL), and 343–363 (FLLP…LALL).

It belongs to the complex I subunit 1 family. NDH is composed of at least 16 different subunits, 5 of which are encoded in the nucleus.

The protein localises to the plastid. It is found in the chloroplast thylakoid membrane. It catalyses the reaction a plastoquinone + NADH + (n+1) H(+)(in) = a plastoquinol + NAD(+) + n H(+)(out). The enzyme catalyses a plastoquinone + NADPH + (n+1) H(+)(in) = a plastoquinol + NADP(+) + n H(+)(out). In terms of biological role, NDH shuttles electrons from NAD(P)H:plastoquinone, via FMN and iron-sulfur (Fe-S) centers, to quinones in the photosynthetic chain and possibly in a chloroplast respiratory chain. The immediate electron acceptor for the enzyme in this species is believed to be plastoquinone. Couples the redox reaction to proton translocation, and thus conserves the redox energy in a proton gradient. This chain is NAD(P)H-quinone oxidoreductase subunit 1, chloroplastic, found in Zygnema circumcarinatum (Green alga).